Consider the following 128-residue polypeptide: Histone H2A type 1-H (128 aa).

The segment at 1 to 22 is disordered; it reads MSGRGKQGGKARAKAKTRSSRA. Position 2 is an N-acetylserine (serine 2). Residue serine 2 is modified to Phosphoserine; by RPS6KA5. A Citrulline; alternate modification is found at arginine 4. Arginine 4 is modified (symmetric dimethylarginine; by PRMT5; alternate). Lysine 6 carries the N6-(2-hydroxyisobutyryl)lysine modification. Over residues 7–19 the composition is skewed to basic residues; that stretch reads QGGKARAKAKTRS. At lysine 10 the chain carries N6-(2-hydroxyisobutyryl)lysine; alternate. Lysine 10 and lysine 14 each carry N6-(beta-hydroxybutyryl)lysine; alternate. At lysine 10 the chain carries N6-lactoyllysine; alternate. Lysine 10 is modified (N6-succinyllysine; alternate). A Glycyl lysine isopeptide (Lys-Gly) (interchain with G-Cter in ubiquitin); alternate cross-link involves residue lysine 14. Lysine 16 is covalently cross-linked (Glycyl lysine isopeptide (Lys-Gly) (interchain with G-Cter in ubiquitin)). Lysine 37 carries the N6-(2-hydroxyisobutyryl)lysine; alternate modification. The residue at position 37 (lysine 37) is an N6-(beta-hydroxybutyryl)lysine; alternate. An N6-crotonyllysine; alternate modification is found at lysine 37. Lysine 75 and lysine 76 each carry N6-(2-hydroxyisobutyryl)lysine. At lysine 96 the chain carries N6-(2-hydroxyisobutyryl)lysine; alternate. An N6-(beta-hydroxybutyryl)lysine; alternate modification is found at lysine 96. N6-succinyllysine; alternate is present on lysine 96. At lysine 96 the chain carries N6-glutaryllysine; alternate. At lysine 100 the chain carries N6-glutaryllysine. Residue glutamine 105 is modified to N5-methylglutamine. An N6-(2-hydroxyisobutyryl)lysine; alternate modification is found at lysine 119. At lysine 119 the chain carries N6-(beta-hydroxybutyryl)lysine; alternate. 2 positions are modified to N6-crotonyllysine; alternate: lysine 119 and lysine 120. N6-glutaryllysine; alternate occurs at positions 119 and 120. Lysine 120 is covalently cross-linked (Glycyl lysine isopeptide (Lys-Gly) (interchain with G-Cter in ubiquitin); alternate). At threonine 121 the chain carries Phosphothreonine; by DCAF1. Residue lysine 126 is modified to N6-crotonyllysine; alternate. Lysine 126 bears the N6-glutaryllysine; alternate mark.

It belongs to the histone H2A family. As to quaternary structure, the nucleosome is a histone octamer containing two molecules each of H2A, H2B, H3 and H4 assembled in one H3-H4 heterotetramer and two H2A-H2B heterodimers. The octamer wraps approximately 147 bp of DNA. Post-translationally, deiminated on Arg-4 in granulocytes upon calcium entry. Monoubiquitination of Lys-120 (H2AK119Ub) by RING1, TRIM37 and RNF2/RING2 complex gives a specific tag for epigenetic transcriptional repression and participates in X chromosome inactivation of female mammals. It is involved in the initiation of both imprinted and random X inactivation. Ubiquitinated H2A is enriched in inactive X chromosome chromatin. Ubiquitination of H2A functions downstream of methylation of 'Lys-27' of histone H3 (H3K27me). H2AK119Ub by RNF2/RING2 can also be induced by ultraviolet and may be involved in DNA repair. Monoubiquitination of Lys-120 (H2AK119Ub) by TRIM37 may promote transformation of cells in a number of breast cancers. Following DNA double-strand breaks (DSBs), it is ubiquitinated through 'Lys-63' linkage of ubiquitin moieties by the E2 ligase UBE2N and the E3 ligases RNF8 and RNF168, leading to the recruitment of repair proteins to sites of DNA damage. Ubiquitination at Lys-14 and Lys-16 (H2AK13Ub and H2AK15Ub, respectively) in response to DNA damage is initiated by RNF168 that mediates monoubiquitination at these 2 sites, and 'Lys-63'-linked ubiquitin are then conjugated to monoubiquitin; RNF8 is able to extend 'Lys-63'-linked ubiquitin chains in vitro. Deubiquitinated by USP51 at Lys-14 and Lys-16 (H2AK13Ub and H2AK15Ub, respectively) after damaged DNA is repaired. H2AK119Ub and ionizing radiation-induced 'Lys-63'-linked ubiquitination (H2AK13Ub and H2AK15Ub) are distinct events. In terms of processing, phosphorylation on Ser-2 (H2AS1ph) is enhanced during mitosis. Phosphorylation on Ser-2 by RPS6KA5/MSK1 directly represses transcription. Acetylation of H3 inhibits Ser-2 phosphorylation by RPS6KA5/MSK1. Phosphorylation at Thr-121 (H2AT120ph) by DCAF1 is present in the regulatory region of many tumor suppresor genes and down-regulates their transcription. Post-translationally, glutamine methylation at Gln-105 (H2AQ104me) by FBL is specifically dedicated to polymerase I. It is present at 35S ribosomal DNA locus and impairs binding of the FACT complex. Symmetric dimethylation on Arg-4 by the PRDM1/PRMT5 complex may play a crucial role in the germ-cell lineage. In terms of processing, crotonylation (Kcr) is specifically present in male germ cells and marks testis-specific genes in post-meiotic cells, including X-linked genes that escape sex chromosome inactivation in haploid cells. Crotonylation marks active promoters and enhancers and confers resistance to transcriptional repressors. It is also associated with post-meiotically activated genes on autosomes. Post-translationally, lactylated in macrophages by EP300/P300 by using lactoyl-CoA directly derived from endogenous or exogenous lactate, leading to stimulates gene transcription.

The protein localises to the nucleus. It localises to the chromosome. Its function is as follows. Core component of nucleosome. Nucleosomes wrap and compact DNA into chromatin, limiting DNA accessibility to the cellular machineries which require DNA as a template. Histones thereby play a central role in transcription regulation, DNA repair, DNA replication and chromosomal stability. DNA accessibility is regulated via a complex set of post-translational modifications of histones, also called histone code, and nucleosome remodeling. The polypeptide is Histone H2A type 1-H (Homo sapiens (Human)).